Consider the following 127-residue polypeptide: Fluoride-specific ion channel FluC 1 (127 aa).

The next 3 membrane-spanning stretches (helical) occupy residues 6 to 26 (PLVT…GSNL), 29 to 49 (FVGL…CGSF), and 95 to 115 (EWAV…VLVG).

The protein belongs to the fluoride channel Fluc/FEX (TC 1.A.43) family.

The protein localises to the cell membrane. It catalyses the reaction fluoride(in) = fluoride(out). Functionally, fluoride-specific ion channel. Important for reducing fluoride concentration in the cell, thus reducing its toxicity. The chain is Fluoride-specific ion channel FluC 1 from Haloarcula marismortui (strain ATCC 43049 / DSM 3752 / JCM 8966 / VKM B-1809) (Halobacterium marismortui).